A 514-amino-acid chain; its full sequence is Membrane-bound lytic murein transglycosylase F (514 aa).

Residues Met-1–Gly-30 form the signal peptide. Residues Lys-31 to Gly-269 are non-LT domain. Residues Asp-270–Lys-514 form an LT domain region. Glu-314 is an active-site residue.

The protein in the N-terminal section; belongs to the bacterial solute-binding protein 3 family. In the C-terminal section; belongs to the transglycosylase Slt family.

It is found in the cell outer membrane. The catalysed reaction is Exolytic cleavage of the (1-&gt;4)-beta-glycosidic linkage between N-acetylmuramic acid (MurNAc) and N-acetylglucosamine (GlcNAc) residues in peptidoglycan, from either the reducing or the non-reducing ends of the peptidoglycan chains, with concomitant formation of a 1,6-anhydrobond in the MurNAc residue.. Functionally, murein-degrading enzyme that degrades murein glycan strands and insoluble, high-molecular weight murein sacculi, with the concomitant formation of a 1,6-anhydromuramoyl product. Lytic transglycosylases (LTs) play an integral role in the metabolism of the peptidoglycan (PG) sacculus. Their lytic action creates space within the PG sacculus to allow for its expansion as well as for the insertion of various structures such as secretion systems and flagella. The protein is Membrane-bound lytic murein transglycosylase F of Salmonella typhimurium (strain LT2 / SGSC1412 / ATCC 700720).